The sequence spans 250 residues: Proteasome subunit alpha (250 aa).

This sequence belongs to the peptidase T1A family. As to quaternary structure, the 20S proteasome core is composed of 14 alpha and 14 beta subunits that assemble into four stacked heptameric rings, resulting in a barrel-shaped structure. The two inner rings, each composed of seven catalytic beta subunits, are sandwiched by two outer rings, each composed of seven alpha subunits. The catalytic chamber with the active sites is on the inside of the barrel. Has a gated structure, the ends of the cylinder being occluded by the N-termini of the alpha-subunits. Is capped at one or both ends by the proteasome regulatory ATPase, PAN.

The protein resides in the cytoplasm. With respect to regulation, the formation of the proteasomal ATPase PAN-20S proteasome complex, via the docking of the C-termini of PAN into the intersubunit pockets in the alpha-rings, triggers opening of the gate for substrate entry. Interconversion between the open-gate and close-gate conformations leads to a dynamic regulation of the 20S proteasome proteolysis activity. In terms of biological role, component of the proteasome core, a large protease complex with broad specificity involved in protein degradation. The sequence is that of Proteasome subunit alpha from Methanobrevibacter smithii (strain ATCC 35061 / DSM 861 / OCM 144 / PS).